Consider the following 170-residue polypeptide: Large ribosomal subunit protein uL5 (170 aa).

It belongs to the universal ribosomal protein uL5 family. In terms of assembly, part of the 50S ribosomal subunit; contacts the 5S rRNA and probably tRNA. Forms a bridge to the 30S subunit in the 70S ribosome.

Its function is as follows. This is one of the proteins that bind and probably mediate the attachment of the 5S RNA into the large ribosomal subunit, where it forms part of the central protuberance. In the 70S ribosome it contacts protein S13 of the 30S subunit (bridge B1b), connecting the 2 subunits; this bridge is implicated in subunit movement. May contact the P site tRNA; the 5S rRNA and some of its associated proteins might help stabilize positioning of ribosome-bound tRNAs. The protein is Large ribosomal subunit protein uL5 of Thermoplasma volcanium (strain ATCC 51530 / DSM 4299 / JCM 9571 / NBRC 15438 / GSS1).